The chain runs to 216 residues: Small ribosomal subunit protein uS3 (216 aa).

A KH type-2 domain is found at 38–106 (LRKMLKDKLY…QANIEIKEVR (69 aa)).

Belongs to the universal ribosomal protein uS3 family. As to quaternary structure, part of the 30S ribosomal subunit. Forms a tight complex with proteins S10 and S14.

Functionally, binds the lower part of the 30S subunit head. Binds mRNA in the 70S ribosome, positioning it for translation. The polypeptide is Small ribosomal subunit protein uS3 (Thermodesulfovibrio yellowstonii (strain ATCC 51303 / DSM 11347 / YP87)).